Reading from the N-terminus, the 157-residue chain is Ribosome maturation factor RimP (157 aa).

The protein belongs to the RimP family.

The protein localises to the cytoplasm. In terms of biological role, required for maturation of 30S ribosomal subunits. The sequence is that of Ribosome maturation factor RimP from Thermobifida fusca (strain YX).